Here is a 1423-residue protein sequence, read N- to C-terminus: Interphotoreceptor matrix proteoglycan 2 (1423 aa).

Residues 1 to 27 (MFAFLWKISLCLLVLGVITGDPQAVAA) form the signal peptide. Over 28 to 1289 (EEKQAKDASP…EYVSEPLVVG (1262 aa)) the chain is Extracellular. An N-linked (GlcNAc...) asparagine glycan is attached at N150. In terms of domain architecture, SEA 1 spans 245–358 (TEQMIEFSIV…NPTVVYTISD (114 aa)). Residues 265–273 (SDPDTAKYQ) form a hyaluronan-binding motif involved in chondroitin sulfate A-binding region. N-linked (GlcNAc...) asparagine glycans are attached at residues N325 and N375. Disordered stretches follow at residues 423–469 (AERP…DSEV), 522–559 (DSSDEFEDTGLSDDFLLPSSPSSHLVPEEPPSTDDYTA), and 577–602 (TKRTVTAEKEVVTQGSPADSSSADSL). The span at 523 to 532 (SSDEFEDTGL) shows a compositional bias: acidic residues. The span at 537–546 (LLPSSPSSHL) shows a compositional bias: low complexity. A compositionally biased stretch (basic and acidic residues) spans 577–587 (TKRTVTAEKEV). N676 carries N-linked (GlcNAc...) asparagine glycosylation. A disordered region spans residues 886 to 907 (FEVSTDTSTEEQQSLDSSLADR). Residues 889–902 (STDTSTEEQQSLDS) are compositionally biased toward polar residues. An SEA 2 domain is found at 1083-1196 (RALVVFFSLR…YSLDVESGEQ (114 aa)). N1128, N1142, and N1160 each carry an N-linked (GlcNAc...) asparagine glycan. EGF-like domains lie at 1196–1234 (QADPCKFQACNEFSECLVNRWSGEAECVCNPGYLSIDGL) and 1237–1279 (NSIC…EHCE). 5 disulfides stabilise this stretch: C1200–C1211, C1205–C1222, C1240–C1253, C1247–C1263, and C1265–C1278. The interval 1266–1274 (RVGENWWYR) is hyaluronan-binding motif involved in chondroitin sulfate C-binding. A helical transmembrane segment spans residues 1290 to 1310 (IAIASVAGFLLVASAVIFFLA). Residues 1311–1423 (RTLRDQYTKS…FVRQHQMKLL (113 aa)) are Cytoplasmic-facing. The interval 1322–1327 (TEDSQG) is hyaluronan-binding motif involved in chondroitin sulfate C-binding.

In terms of processing, highly glycosylated (N- and O-linked carbohydrates). In terms of tissue distribution, expressed in retina.

Its subcellular location is the photoreceptor outer segment membrane. The protein resides in the photoreceptor inner segment membrane. It is found in the secreted. The protein localises to the extracellular space. It localises to the extracellular matrix. Its subcellular location is the interphotoreceptor matrix. Its function is as follows. Chondroitin sulfate- and hyaluronan-binding proteoglycan involved in the organization of interphotoreceptor matrix. The polypeptide is Interphotoreceptor matrix proteoglycan 2 (IMPG2) (Gallus gallus (Chicken)).